The following is an 84-amino-acid chain: U8-theraphotoxin-Hhn1c 3 (84 aa).

The signal sequence occupies residues methionine 1 to cysteine 21. Intrachain disulfides connect cysteine 23–cysteine 35, cysteine 29–cysteine 44, cysteine 34–cysteine 67, cysteine 54–cysteine 75, and cysteine 69–cysteine 81.

It belongs to the AVIT (prokineticin) family. Expressed by the venom gland.

It is found in the secreted. The protein is U8-theraphotoxin-Hhn1c 3 of Cyriopagopus hainanus (Chinese bird spider).